Consider the following 525-residue polypeptide: Ankyrin repeat and SOCS box protein 3 (525 aa).

ANK repeat units lie at residues 9-38 (DTCSTVGLAAREGNVKVLRKLLKKGRSIDV), 42-71 (RGWMPIHEASYHNSVECLRMLIRADSSENY), 78-107 (EGFCALHLAASQGHWKIIQILLEAGADPNA), 111-140 (EETTPLFLAVENGQIDVLRLLLRYGANVNG), 145-174 (CGWNALHQASFQGNAEIIKLLLKKGANKEC), 178-207 (FGITPLFVAAQYGKLESLSILISSGADVNC), 211-240 (DKATPLFIAAQEGHTECVELLLSSGADPDL), 246-275 (NWQLPIHAAAQMGHTKILDLLIPLTNRVCD), 279-308 (NKVSPVYSAVLGGHEECLEMLLQSGYSPDA), 315-346 (GFSSPLCMAFQKDCDFFGIVNILLKYGAQLNE), and 348-373 (HLAYCLKYERFSVFRYFLKKCCPSTP). Residues 441–505 (MLSARASNSS…HDYLLYAEVL (65 aa)) form the SOCS box domain.

This sequence belongs to the ankyrin SOCS box (ASB) family. In terms of assembly, interacts with ELOB and TNFRSF1B.

It participates in protein modification; protein ubiquitination. Its function is as follows. Probable substrate-recognition component of a SCF-like ECS (Elongin-Cullin-SOCS-box protein) E3 ubiquitin-protein ligase complex which mediates the ubiquitination and subsequent proteasomal degradation of target proteins. Recognizes TNFRSF1B. In Bos taurus (Bovine), this protein is Ankyrin repeat and SOCS box protein 3 (ASB3).